We begin with the raw amino-acid sequence, 302 residues long: Phosphoribosylaminoimidazole-succinocarboxamide synthase (302 aa).

The protein belongs to the SAICAR synthetase family.

It catalyses the reaction 5-amino-1-(5-phospho-D-ribosyl)imidazole-4-carboxylate + L-aspartate + ATP = (2S)-2-[5-amino-1-(5-phospho-beta-D-ribosyl)imidazole-4-carboxamido]succinate + ADP + phosphate + 2 H(+). It participates in purine metabolism; IMP biosynthesis via de novo pathway; 5-amino-1-(5-phospho-D-ribosyl)imidazole-4-carboxamide from 5-amino-1-(5-phospho-D-ribosyl)imidazole-4-carboxylate: step 1/2. The chain is Phosphoribosylaminoimidazole-succinocarboxamide synthase from Ralstonia nicotianae (strain ATCC BAA-1114 / GMI1000) (Ralstonia solanacearum).